The following is an 800-amino-acid chain: Nucleolar complex protein 3 homolog (800 aa).

2 stretches are compositionally biased toward basic residues: residues 1–19 (MGPA…RKLL) and 42–53 (KKQRKEQRKLHK). Disordered stretches follow at residues 1–91 (MGPA…TDMM) and 167–197 (KPVL…SAPL). Residues 65-74 (PLERYKKRPE) are compositionally biased toward basic and acidic residues. Positions 449-490 (SFKEKRKNLSRMQRKWKKAEEKLQKELLEAEATESKEKKIKL) form a coiled coil. A disordered region spans residues 780–800 (LQEEPEQMSLDFTSPHTQQEP). Polar residues predominate over residues 789-800 (LDFTSPHTQQEP).

This sequence belongs to the CBF/MAK21 family.

It localises to the nucleus. The protein localises to the nucleolus. This Danio rerio (Zebrafish) protein is Nucleolar complex protein 3 homolog (noc3l).